Consider the following 173-residue polypeptide: MAIILGVDPGSRITGYGVIQCQGRHQIYLGSGCIRTSSEELPGRLKQIFDGITEIIRQYQPDEFAIERVFMAKNADSALKLGQARGAAIVAATVANLPVAEYSATQIKSAVVGTGRAQKAQVQHMIQQLLKLPAAPQADAADALGVAVCHYHTSQSLIALSGRATARTYGRYR.

Catalysis depends on residues Asp-8, Glu-67, and Asp-139. 3 residues coordinate Mg(2+): Asp-8, Glu-67, and Asp-139.

The protein belongs to the RuvC family. In terms of assembly, homodimer which binds Holliday junction (HJ) DNA. The HJ becomes 2-fold symmetrical on binding to RuvC with unstacked arms; it has a different conformation from HJ DNA in complex with RuvA. In the full resolvosome a probable DNA-RuvA(4)-RuvB(12)-RuvC(2) complex forms which resolves the HJ. The cofactor is Mg(2+).

It localises to the cytoplasm. It catalyses the reaction Endonucleolytic cleavage at a junction such as a reciprocal single-stranded crossover between two homologous DNA duplexes (Holliday junction).. In terms of biological role, the RuvA-RuvB-RuvC complex processes Holliday junction (HJ) DNA during genetic recombination and DNA repair. Endonuclease that resolves HJ intermediates. Cleaves cruciform DNA by making single-stranded nicks across the HJ at symmetrical positions within the homologous arms, yielding a 5'-phosphate and a 3'-hydroxyl group; requires a central core of homology in the junction. The consensus cleavage sequence is 5'-(A/T)TT(C/G)-3'. Cleavage occurs on the 3'-side of the TT dinucleotide at the point of strand exchange. HJ branch migration catalyzed by RuvA-RuvB allows RuvC to scan DNA until it finds its consensus sequence, where it cleaves and resolves the cruciform DNA. This chain is Crossover junction endodeoxyribonuclease RuvC, found in Shewanella baltica (strain OS223).